We begin with the raw amino-acid sequence, 80 residues long: Large ribosomal subunit protein uL24 (80 aa).

A disordered region spans residues 53-80; sequence HMRPTQGQTQGSIIEREFPIHSSNVKKS.

This sequence belongs to the universal ribosomal protein uL24 family. Part of the 50S ribosomal subunit.

Functionally, one of two assembly initiator proteins, it binds directly to the 5'-end of the 23S rRNA, where it nucleates assembly of the 50S subunit. Its function is as follows. One of the proteins that surrounds the polypeptide exit tunnel on the outside of the subunit. The polypeptide is Large ribosomal subunit protein uL24 (Pelodictyon phaeoclathratiforme (strain DSM 5477 / BU-1)).